The chain runs to 518 residues: Cytochrome P450 709B3 (518 aa).

A helical membrane pass occupies residues leucine 3–tryptophan 23. Residue cysteine 465 participates in heme binding.

Belongs to the cytochrome P450 family. Heme is required as a cofactor. In terms of tissue distribution, highly expressed in rosette leaves and siliques, and at lower levels in flowers.

The protein resides in the membrane. Plays a role in abscisic acid (ABA) and salt stress response. May regulate the salt stress response independently of well-characterized pathways. Does not function as cytokinin hydroxylase in yeast heterologous system. In Arabidopsis thaliana (Mouse-ear cress), this protein is Cytochrome P450 709B3.